Reading from the N-terminus, the 245-residue chain is MIFVQQFEEVRSILEKAKKITVLTGAGASTESGIPDFRSANGLYADANVEMYLSRGYYNRSPKEFWKHYKEIFQINTFHQYKPNRGHRFLAELEEQGKDITILTQNIDGLHQLGGSKHVIDLHGTLQTAHCPKCKSGYDLQYMIDHEVPRCEKCNFILNPDVVLYGDTLPQYQNAIKRLYETDVLIVMGTSLKVQPVASFPQIAKREVGATTILVNEELTGQEYNFDFVFQNKIGEFVEGLSSMK.

Positions 1-245 constitute a Deacetylase sirtuin-type domain; that stretch reads MIFVQQFEEV…EFVEGLSSMK (245 aa). Residues alanine 26, threonine 30, phenylalanine 37, arginine 38, glutamine 105, isoleucine 107, aspartate 108, and histidine 123 each contribute to the NAD(+) site. Phenylalanine 37 provides a ligand contact to nicotinamide. Residues isoleucine 107 and aspartate 108 each contribute to the nicotinamide site. Catalysis depends on histidine 123, which acts as the Proton acceptor. Zn(2+) contacts are provided by cysteine 131, cysteine 134, cysteine 151, and cysteine 154. NAD(+) contacts are provided by threonine 190, serine 191, asparagine 216, and isoleucine 234.

This sequence belongs to the sirtuin family. Class U subfamily. Zn(2+) is required as a cofactor.

Its subcellular location is the cytoplasm. It carries out the reaction N(6)-acetyl-L-lysyl-[protein] + NAD(+) + H2O = 2''-O-acetyl-ADP-D-ribose + nicotinamide + L-lysyl-[protein]. Functionally, NAD-dependent protein deacetylase which modulates the activities of several enzymes which are inactive in their acetylated form. The polypeptide is NAD-dependent protein deacetylase (Bacillus cereus (strain ATCC 14579 / DSM 31 / CCUG 7414 / JCM 2152 / NBRC 15305 / NCIMB 9373 / NCTC 2599 / NRRL B-3711)).